We begin with the raw amino-acid sequence, 411 residues long: Tyrosine--tRNA ligase (411 aa).

Residue Tyr34 coordinates L-tyrosine. The 'HIGH' region signature appears at 39 to 48 (CTATSLHIGS). 2 residues coordinate L-tyrosine: Tyr171 and Gln175. The short motif at 231-235 (KMGKT) is the 'KMSKS' region element. An ATP-binding site is contributed by Lys234. The S4 RNA-binding domain maps to 345-411 (ISAYELFHEA…GKKRHILVRV (67 aa)).

Belongs to the class-I aminoacyl-tRNA synthetase family. TyrS type 1 subfamily. In terms of assembly, homodimer.

Its subcellular location is the cytoplasm. It catalyses the reaction tRNA(Tyr) + L-tyrosine + ATP = L-tyrosyl-tRNA(Tyr) + AMP + diphosphate + H(+). Its function is as follows. Catalyzes the attachment of tyrosine to tRNA(Tyr) in a two-step reaction: tyrosine is first activated by ATP to form Tyr-AMP and then transferred to the acceptor end of tRNA(Tyr). The sequence is that of Tyrosine--tRNA ligase from Rickettsia peacockii (strain Rustic).